Consider the following 300-residue polypeptide: Meiosis-specific cyclin crs1 (300 aa).

Residues 61–183 (IIEQEKKGLT…VLALLNFDIY (123 aa)) form the Cyclin N-terminal domain.

It belongs to the cyclin family. Cyclin AB subfamily.

The protein resides in the cytoplasm. It is found in the nucleus. Functionally, has a role in meiotic chromosome segregation. The polypeptide is Meiosis-specific cyclin crs1 (crs1) (Schizosaccharomyces pombe (strain 972 / ATCC 24843) (Fission yeast)).